A 102-amino-acid polypeptide reads, in one-letter code: Small ribosomal subunit protein uS10 (102 aa).

The protein belongs to the universal ribosomal protein uS10 family. As to quaternary structure, part of the 30S ribosomal subunit.

In terms of biological role, involved in the binding of tRNA to the ribosomes. The sequence is that of Small ribosomal subunit protein uS10 from Dehalococcoides mccartyi (strain ATCC BAA-2100 / JCM 16839 / KCTC 5957 / BAV1).